Reading from the N-terminus, the 261-residue chain is MEMO1 family protein AF_2310 (261 aa).

The protein belongs to the MEMO1 family.

The protein is MEMO1 family protein AF_2310 of Archaeoglobus fulgidus (strain ATCC 49558 / DSM 4304 / JCM 9628 / NBRC 100126 / VC-16).